We begin with the raw amino-acid sequence, 291 residues long: 2-C-methyl-D-erythritol 4-phosphate cytidylyltransferase (291 aa).

The segment at M1–A23 is disordered.

The protein belongs to the IspD/TarI cytidylyltransferase family. IspD subfamily.

The enzyme catalyses 2-C-methyl-D-erythritol 4-phosphate + CTP + H(+) = 4-CDP-2-C-methyl-D-erythritol + diphosphate. It functions in the pathway isoprenoid biosynthesis; isopentenyl diphosphate biosynthesis via DXP pathway; isopentenyl diphosphate from 1-deoxy-D-xylulose 5-phosphate: step 2/6. Functionally, catalyzes the formation of 4-diphosphocytidyl-2-C-methyl-D-erythritol from CTP and 2-C-methyl-D-erythritol 4-phosphate (MEP). The protein is 2-C-methyl-D-erythritol 4-phosphate cytidylyltransferase of Bifidobacterium longum (strain DJO10A).